The sequence spans 872 residues: Alanine--tRNA ligase (872 aa).

4 residues coordinate Zn(2+): His-567, His-571, Cys-669, and His-673.

This sequence belongs to the class-II aminoacyl-tRNA synthetase family. Requires Zn(2+) as cofactor.

It localises to the cytoplasm. It carries out the reaction tRNA(Ala) + L-alanine + ATP = L-alanyl-tRNA(Ala) + AMP + diphosphate. Functionally, catalyzes the attachment of alanine to tRNA(Ala) in a two-step reaction: alanine is first activated by ATP to form Ala-AMP and then transferred to the acceptor end of tRNA(Ala). Also edits incorrectly charged Ser-tRNA(Ala) and Gly-tRNA(Ala) via its editing domain. This chain is Alanine--tRNA ligase, found in Streptococcus pyogenes serotype M5 (strain Manfredo).